A 190-amino-acid chain; its full sequence is Cypemycin cysteine dehydrogenase (decarboxylating) (190 aa).

The protein belongs to the HFCD (homooligomeric flavin containing Cys decarboxylase) superfamily.

The enzyme catalyses [cypemycin](1-18)-L-Cys-L-Leu-L-Val-L-Cys + A = C(3,19),S(21)-[cypemycin](1-18)-L-Ala-L-Leu-N-thioethenyl-L-valinamide + hydrogen sulfide + AH2 + CO2. In terms of biological role, involved in the biosynthesis of the lanaridin cypemycin. The chain is Cypemycin cysteine dehydrogenase (decarboxylating) from Streptomyces sp.